The sequence spans 264 residues: Thymidylate synthase (264 aa).

DUMP is bound at residue R21. Residue H51 participates in (6R)-5,10-methylene-5,6,7,8-tetrahydrofolate binding. A dUMP-binding site is contributed by 126–127; sequence RR. The Nucleophile role is filled by C146. Residues 166–169, N177, and 207–209 contribute to the dUMP site; these read RSCD and HLY. D169 contributes to the (6R)-5,10-methylene-5,6,7,8-tetrahydrofolate binding site. A263 contributes to the (6R)-5,10-methylene-5,6,7,8-tetrahydrofolate binding site.

The protein belongs to the thymidylate synthase family. Bacterial-type ThyA subfamily. In terms of assembly, homodimer.

The protein localises to the cytoplasm. The enzyme catalyses dUMP + (6R)-5,10-methylene-5,6,7,8-tetrahydrofolate = 7,8-dihydrofolate + dTMP. It participates in pyrimidine metabolism; dTTP biosynthesis. Functionally, catalyzes the reductive methylation of 2'-deoxyuridine-5'-monophosphate (dUMP) to 2'-deoxythymidine-5'-monophosphate (dTMP) while utilizing 5,10-methylenetetrahydrofolate (mTHF) as the methyl donor and reductant in the reaction, yielding dihydrofolate (DHF) as a by-product. This enzymatic reaction provides an intracellular de novo source of dTMP, an essential precursor for DNA biosynthesis. The polypeptide is Thymidylate synthase (Enterobacter sp. (strain 638)).